We begin with the raw amino-acid sequence, 173 residues long: Crossover junction endodeoxyribonuclease RuvC (173 aa).

Catalysis depends on residues Asp8, Glu67, and Asp139. 3 residues coordinate Mg(2+): Asp8, Glu67, and Asp139.

Belongs to the RuvC family. Homodimer which binds Holliday junction (HJ) DNA. The HJ becomes 2-fold symmetrical on binding to RuvC with unstacked arms; it has a different conformation from HJ DNA in complex with RuvA. In the full resolvosome a probable DNA-RuvA(4)-RuvB(12)-RuvC(2) complex forms which resolves the HJ. The cofactor is Mg(2+).

It is found in the cytoplasm. The catalysed reaction is Endonucleolytic cleavage at a junction such as a reciprocal single-stranded crossover between two homologous DNA duplexes (Holliday junction).. The RuvA-RuvB-RuvC complex processes Holliday junction (HJ) DNA during genetic recombination and DNA repair. Endonuclease that resolves HJ intermediates. Cleaves cruciform DNA by making single-stranded nicks across the HJ at symmetrical positions within the homologous arms, yielding a 5'-phosphate and a 3'-hydroxyl group; requires a central core of homology in the junction. The consensus cleavage sequence is 5'-(A/T)TT(C/G)-3'. Cleavage occurs on the 3'-side of the TT dinucleotide at the point of strand exchange. HJ branch migration catalyzed by RuvA-RuvB allows RuvC to scan DNA until it finds its consensus sequence, where it cleaves and resolves the cruciform DNA. This Citrobacter koseri (strain ATCC BAA-895 / CDC 4225-83 / SGSC4696) protein is Crossover junction endodeoxyribonuclease RuvC.